Consider the following 500-residue polypeptide: L-arabinose isomerase (500 aa).

The Mn(2+) site is built by glutamate 306, glutamate 333, histidine 350, and histidine 450.

It belongs to the arabinose isomerase family. As to quaternary structure, homohexamer. It depends on Mn(2+) as a cofactor.

It carries out the reaction beta-L-arabinopyranose = L-ribulose. It functions in the pathway carbohydrate degradation; L-arabinose degradation via L-ribulose; D-xylulose 5-phosphate from L-arabinose (bacterial route): step 1/3. Its function is as follows. Catalyzes the conversion of L-arabinose to L-ribulose. This Escherichia fergusonii (strain ATCC 35469 / DSM 13698 / CCUG 18766 / IAM 14443 / JCM 21226 / LMG 7866 / NBRC 102419 / NCTC 12128 / CDC 0568-73) protein is L-arabinose isomerase.